The following is a 33-amino-acid chain: Mu-theraphotoxin-Osp1b (33 aa).

3 disulfides stabilise this stretch: Cys2/Cys17, Cys9/Cys22, and Cys16/Cys29.

This sequence belongs to the neurotoxin 10 (Hwtx-1) family. 22 (Htx-4) subfamily. Expressed by the venom gland.

The protein localises to the secreted. Voltage-gated sodium channel Nav1.7/SCN9A inhibitor. The polypeptide is Mu-theraphotoxin-Osp1b (Orphnaecus sp. (strain Maanghit-Cave/Philippines) (Tarantula spider)).